We begin with the raw amino-acid sequence, 216 residues long: Protein-L-isoaspartate O-methyltransferase (216 aa).

Residue serine 66 is part of the active site.

This sequence belongs to the methyltransferase superfamily. L-isoaspartyl/D-aspartyl protein methyltransferase family.

It localises to the cytoplasm. It carries out the reaction [protein]-L-isoaspartate + S-adenosyl-L-methionine = [protein]-L-isoaspartate alpha-methyl ester + S-adenosyl-L-homocysteine. Functionally, catalyzes the methyl esterification of L-isoaspartyl residues in peptides and proteins that result from spontaneous decomposition of normal L-aspartyl and L-asparaginyl residues. It plays a role in the repair and/or degradation of damaged proteins. This chain is Protein-L-isoaspartate O-methyltransferase, found in Dechloromonas aromatica (strain RCB).